The primary structure comprises 192 residues: Elongation factor P (192 aa).

It belongs to the elongation factor P family.

The protein resides in the cytoplasm. It participates in protein biosynthesis; polypeptide chain elongation. Involved in peptide bond synthesis. Stimulates efficient translation and peptide-bond synthesis on native or reconstituted 70S ribosomes in vitro. Probably functions indirectly by altering the affinity of the ribosome for aminoacyl-tRNA, thus increasing their reactivity as acceptors for peptidyl transferase. The chain is Elongation factor P from Borrelia garinii subsp. bavariensis (strain ATCC BAA-2496 / DSM 23469 / PBi) (Borreliella bavariensis).